The chain runs to 466 residues: Light-independent protochlorophyllide reductase subunit N (466 aa).

Residues C23, C48, and C108 each coordinate [4Fe-4S] cluster.

This sequence belongs to the BchN/ChlN family. Protochlorophyllide reductase is composed of three subunits; ChlL, ChlN and ChlB. Forms a heterotetramer of two ChlB and two ChlN subunits. Requires [4Fe-4S] cluster as cofactor.

The catalysed reaction is chlorophyllide a + oxidized 2[4Fe-4S]-[ferredoxin] + 2 ADP + 2 phosphate = protochlorophyllide a + reduced 2[4Fe-4S]-[ferredoxin] + 2 ATP + 2 H2O. It participates in porphyrin-containing compound metabolism; chlorophyll biosynthesis (light-independent). Functionally, component of the dark-operative protochlorophyllide reductase (DPOR) that uses Mg-ATP and reduced ferredoxin to reduce ring D of protochlorophyllide (Pchlide) to form chlorophyllide a (Chlide). This reaction is light-independent. The NB-protein (ChlN-ChlB) is the catalytic component of the complex. The polypeptide is Light-independent protochlorophyllide reductase subunit N (Synechococcus elongatus (strain ATCC 33912 / PCC 7942 / FACHB-805) (Anacystis nidulans R2)).